Reading from the N-terminus, the 380-residue chain is 3-isopropylmalate dehydratase large subunit (380 aa).

[4Fe-4S] cluster contacts are provided by Cys262, Cys320, and Cys323.

The protein belongs to the aconitase/IPM isomerase family. LeuC type 2 subfamily. As to quaternary structure, heterodimer of LeuC and LeuD. Requires [4Fe-4S] cluster as cofactor.

The catalysed reaction is (2R,3S)-3-isopropylmalate = (2S)-2-isopropylmalate. It functions in the pathway amino-acid biosynthesis; L-leucine biosynthesis; L-leucine from 3-methyl-2-oxobutanoate: step 2/4. Functionally, catalyzes the isomerization between 2-isopropylmalate and 3-isopropylmalate, via the formation of 2-isopropylmaleate. In Pyrococcus horikoshii (strain ATCC 700860 / DSM 12428 / JCM 9974 / NBRC 100139 / OT-3), this protein is 3-isopropylmalate dehydratase large subunit.